The sequence spans 284 residues: Mediator of RNA polymerase II transcription subunit 4 (284 aa).

Residue S2 is modified to N-acetylserine. Residues 205–284 (RIPGEEVEET…DLDLFDPDDF (80 aa)) form a disordered region. Over residues 225-238 (EEQKGQMAKKEGTP) the composition is skewed to basic and acidic residues. T237 is subject to Phosphothreonine; by KIN28. S242 is subject to Phosphoserine. Over residues 248–265 (TAKEVGDEADNTKDKEKE) the composition is skewed to basic and acidic residues. The segment covering 266-284 (ENNDDALDLDLDLFDPDDF) has biased composition (acidic residues).

This sequence belongs to the Mediator complex subunit 4 family. In terms of assembly, component of the Mediator complex, which is composed of at least 21 subunits that form three structurally distinct submodules. The Mediator head module contains MED6, MED8, MED11, SRB4/MED17, SRB5/MED18, ROX3/MED19, SRB2/MED20 and SRB6/MED22, the middle module contains MED1, MED4, NUT1/MED5, MED7, CSE2/MED9, NUT2/MED10, SRB7/MED21 and SOH1/MED31, and the tail module contains MED2, PGD1/MED3, RGR1/MED14, GAL11/MED15 and SIN4/MED16. The head and the middle modules interact directly with RNA polymerase II, whereas the elongated tail module interacts with gene-specific regulatory proteins. MED4 interacts directly with MED1, MED7 and SRB7/MED21.

Its subcellular location is the nucleus. Component of the Mediator complex, a coactivator involved in the regulated transcription of nearly all RNA polymerase II-dependent genes. Mediator functions as a bridge to convey information from gene-specific regulatory proteins to the basal RNA polymerase II transcription machinery. The Mediator complex, having a compact conformation in its free form, is recruited to promoters by direct interactions with regulatory proteins and serves for the assembly of a functional preinitiation complex with RNA polymerase II and the general transcription factors. The Mediator complex unfolds to an extended conformation and partially surrounds RNA polymerase II, specifically interacting with the unphosphorylated form of the C-terminal domain (CTD) of RNA polymerase II. The Mediator complex dissociates from the RNA polymerase II holoenzyme and stays at the promoter when transcriptional elongation begins. This Saccharomyces cerevisiae (strain ATCC 204508 / S288c) (Baker's yeast) protein is Mediator of RNA polymerase II transcription subunit 4 (MED4).